A 261-amino-acid chain; its full sequence is 3-deoxy-manno-octulosonate cytidylyltransferase (261 aa).

It belongs to the KdsB family.

It is found in the cytoplasm. It catalyses the reaction 3-deoxy-alpha-D-manno-oct-2-ulosonate + CTP = CMP-3-deoxy-beta-D-manno-octulosonate + diphosphate. Its pathway is nucleotide-sugar biosynthesis; CMP-3-deoxy-D-manno-octulosonate biosynthesis; CMP-3-deoxy-D-manno-octulosonate from 3-deoxy-D-manno-octulosonate and CTP: step 1/1. It functions in the pathway bacterial outer membrane biogenesis; lipopolysaccharide biosynthesis. In terms of biological role, activates KDO (a required 8-carbon sugar) for incorporation into bacterial lipopolysaccharide in Gram-negative bacteria. This is 3-deoxy-manno-octulosonate cytidylyltransferase from Marinobacter nauticus (strain ATCC 700491 / DSM 11845 / VT8) (Marinobacter aquaeolei).